The sequence spans 337 residues: Vacuolar protein sorting-associated protein 26B-A (337 aa).

The tract at residues 313–337 (RFEGTSHPETRPQHSGAAAVEQEHE) is disordered.

This sequence belongs to the VPS26 family. In terms of assembly, component of the heterotrimeric retromer cargo-selective complex (CSC) which is believed to associate with variable sorting nexins to form functionally distinct retromer complex variants.

The protein localises to the cytoplasm. It localises to the endosome membrane. Its subcellular location is the early endosome. Functionally, acts as a component of the retromer cargo-selective complex (CSC). The CSC is believed to be the core functional component of retromer or respective retromer complex variants acting to prevent missorting of selected transmembrane cargo proteins into the lysosomal degradation pathway. Retromer mediates retrograde transport of cargo proteins from endosomes to the trans-Golgi network (TGN). This is Vacuolar protein sorting-associated protein 26B-A (vps26b-a) from Xenopus laevis (African clawed frog).